Consider the following 391-residue polypeptide: Tyrosinase-like protein phomQ2 (391 aa).

Positions Met-1 to Gly-21 are disordered. Residues Ile-61–Ile-81 form a helical membrane-spanning segment. N-linked (GlcNAc...) asparagine glycosylation is found at Asn-97 and Asn-141. Cu cation-binding residues include His-160 and His-169. N-linked (GlcNAc...) asparagine glycosylation is found at Asn-204, Asn-246, and Asn-261. Positions 298 and 324 each coordinate Cu cation. The N-linked (GlcNAc...) asparagine glycan is linked to Asn-353.

This sequence belongs to the tyrosinase family. It depends on Cu(2+) as a cofactor.

The protein localises to the membrane. It participates in mycotoxin biosynthesis. Functionally, tyrosinase-like protein; part of the gene cluster that mediates the biosynthesis of the phomopsins, a group of hexapeptide mycotoxins which infects lupins and causes lupinosis disease in livestock. Within the pathway, phomQ2 is involved in the generation of the common 13-membered macrocycle, possibly by catalyzing the hydroxylation of Tyr. The pathway starts with the processing of the precursor phomA by several endopeptidases including kexin proteases as well as the cluster-specific S41 family peptidase phomP1 and the oligopeptidase phomG to produce 10 identical copies of the hexapeptide Tyr-Val-Ile-Pro-Ile-Asp. After being excised from the precursor peptide, the core peptides are cyclized and modified post-translationally by enzymes encoded within the gene cluster. The timing and order of proteolysis of the phomA precursor and PTMs are still unknown. Two tyrosinase-like enzymes, phomQ1 and phomQ2, catalyze the chlorination and hydroxylation of Tyr, respectively. PhomYb, is proposed to be involved in the construction of the macrocyclic structure. The other 4 ustYa family proteins may be involved in PTMs that generate the unique structure of phomopsin A. PhomYa is required for the hydroxylation of C-beta of Tyr. PhomYc, phomYd, and phomYe are responsible for the biosynthesis of 2,3-dehydroisoleucine (dIle), 2,3-dehydroaspartic acid (dAsp), and 3,4-dehydroproline (dPro), respectively. While dIle formation by phomYc is indispensable for the installation of dAsp by phomYd, the order of the other PTMs have not been elucidated yet. Most of the biosynthetic enzymes likely have broad substrate specificity, and thus, there might be a metabolic grid from a precursor to phomopsin A. The enzyme(s) responsible for the biosynthesis of 3,4-dehydrovaline (dVal) have also not been identified yet. Finally, phomM acts as an S-adenosylmethionine-dependent alpha-N-methyltransferase that catalyzes two successive N-methylation reactions, converting N-desmethyl-phomopsin A to phomopsin A and phomopsin A further to an N,N-dimethylated congener called phomopsin E. In Diaporthe leptostromiformis (Lupinosis disease fungus), this protein is Tyrosinase-like protein phomQ2.